A 158-amino-acid chain; its full sequence is NAD(P)H-quinone oxidoreductase subunit J, chloroplastic (158 aa).

It belongs to the complex I 30 kDa subunit family. As to quaternary structure, NDH is composed of at least 16 different subunits, 5 of which are encoded in the nucleus.

It localises to the plastid. The protein resides in the chloroplast thylakoid membrane. It catalyses the reaction a plastoquinone + NADH + (n+1) H(+)(in) = a plastoquinol + NAD(+) + n H(+)(out). The enzyme catalyses a plastoquinone + NADPH + (n+1) H(+)(in) = a plastoquinol + NADP(+) + n H(+)(out). NDH shuttles electrons from NAD(P)H:plastoquinone, via FMN and iron-sulfur (Fe-S) centers, to quinones in the photosynthetic chain and possibly in a chloroplast respiratory chain. The immediate electron acceptor for the enzyme in this species is believed to be plastoquinone. Couples the redox reaction to proton translocation, and thus conserves the redox energy in a proton gradient. This chain is NAD(P)H-quinone oxidoreductase subunit J, chloroplastic, found in Piper cenocladum (Ant piper).